An 88-amino-acid polypeptide reads, in one-letter code: MANTPSAQKAVRKVAARTQVNRARRSRVRTFMRKFDDALAGGDRASAEVAFKNFEPEIMRAVSKGVFHKNAAARKVSRLAKRLKALSV.

It belongs to the bacterial ribosomal protein bS20 family.

Its function is as follows. Binds directly to 16S ribosomal RNA. The protein is Small ribosomal subunit protein bS20 of Bartonella henselae (strain ATCC 49882 / DSM 28221 / CCUG 30454 / Houston 1) (Rochalimaea henselae).